We begin with the raw amino-acid sequence, 588 residues long: Myc box-dependent-interacting protein 1 (588 aa).

At A2 the chain carries N-acetylalanine. The interaction with BIN2 stretch occupies residues 2-122 (AEMGSKGVTA…DYHQKLVDQA (121 aa)). Coiled coils occupy residues 15 to 42 (ASNV…TKDE) and 193 to 274 (HLVA…EKQH). Residues 29 to 276 (VLQKLGKADE…LVSLEKQHGS (248 aa)) enclose the BAR domain. The tract at residues 279 to 355 (FTVKAQPSDS…PKHTPSKEMK (77 aa)) is disordered. Phosphoserine occurs at positions 296, 298, and 304. T308 bears the Phosphothreonine mark. Phosphoserine is present on residues S324 and S332. Positions 379–422 (FEAPGPFSEQASLLDLDFEPLPPVASPVKAPTPSGQSIPWDLWE) are clathrin-binding. Positions 448–483 (PSQTAEPGPAQPAEASEVVGGTQEPGETAASEATSS) are disordered. The segment covering 474–483 (ETAASEATSS) has biased composition (low complexity). The SH3 domain maps to 515–588 (GFMFKVQAQH…FPENFTERVQ (74 aa)).

In terms of assembly, heterodimer with AMPH. Binds SH3GLB1. Interacts (via SH3 domain) with DNM1. Interacts with SYNJ1. Interacts (via SH3 domain) with DNM2. Interacts with CLTC. Interacts with AP2A2. Interacts with AP2B1. Interacts with MYC (via N-terminal transactivation domain); the interaction requires the integrity of the conserved MYC box regions 1 and 2. Interacts with BIN2. Interacts with SNX4. Interacts (via BAR domain) with BACE1. Binds (via BAR domain) F-actin. Phosphorylated by protein kinase C. As to expression, highly expressed in the brain and muscle. Isoform AMPH2-1 is expressed only in the brain where it is concentrated in axon initial segments and nodes of Ranvier. Isoform AMPH2-2 is widely expressed.

The protein localises to the nucleus. Its subcellular location is the cytoplasm. It localises to the endosome. It is found in the cell membrane. The protein resides in the sarcolemma. The protein localises to the T-tubule. Functionally, is a key player in the control of plasma membrane curvature, and membrane shaping and remodeling. Required in muscle cells for the formation of T-tubules, tubular invaginations of the plasma membrane that function in depolarization-contraction coupling. Required in muscle cells for the formation of T-tubules, tubular invaginations of the plasma membrane that function in depolarization-contraction coupling. Is a negative regulator of endocytosis. Is also involved in the regulation of intracellular vesicles sorting, modulation of BACE1 trafficking and the control of amyloid-beta production. In neuronal circuits, endocytosis regulation may influence the internalization of PHF-tau aggregates. May be involved in the regulation of MYC activity and the control cell proliferation. The sequence is that of Myc box-dependent-interacting protein 1 (Bin1) from Rattus norvegicus (Rat).